The following is a 319-amino-acid chain: Acetyl-coenzyme A carboxylase carboxyl transferase subunit alpha (319 aa).

In terms of domain architecture, CoA carboxyltransferase C-terminal spans 39–293 (RLQKKSNDLT…KAVLEKQLHE (255 aa)).

Belongs to the AccA family. Acetyl-CoA carboxylase is a heterohexamer composed of biotin carboxyl carrier protein (AccB), biotin carboxylase (AccC) and two subunits each of ACCase subunit alpha (AccA) and ACCase subunit beta (AccD).

It localises to the cytoplasm. The catalysed reaction is N(6)-carboxybiotinyl-L-lysyl-[protein] + acetyl-CoA = N(6)-biotinyl-L-lysyl-[protein] + malonyl-CoA. The protein operates within lipid metabolism; malonyl-CoA biosynthesis; malonyl-CoA from acetyl-CoA: step 1/1. Functionally, component of the acetyl coenzyme A carboxylase (ACC) complex. First, biotin carboxylase catalyzes the carboxylation of biotin on its carrier protein (BCCP) and then the CO(2) group is transferred by the carboxyltransferase to acetyl-CoA to form malonyl-CoA. In Neisseria meningitidis serogroup A / serotype 4A (strain DSM 15465 / Z2491), this protein is Acetyl-coenzyme A carboxylase carboxyl transferase subunit alpha.